We begin with the raw amino-acid sequence, 43 residues long: Omega-agatoxin-Aa3c (43 aa).

Cystine bridges form between C2/C19, C9/C25, and C27/C38.

This sequence belongs to the neurotoxin 04 (omega-agtx) family. 03 (type II/III omega-agtx) subfamily. Expressed by the venom gland.

The protein resides in the secreted. Omega-agatoxins are antagonists of voltage-gated calcium channels (Cav). The sequence is that of Omega-agatoxin-Aa3c from Agelenopsis aperta (North American funnel-web spider).